The sequence spans 547 residues: Sodium-coupled neutral amino acid transporter 4 (547 aa).

The Extracellular portion of the chain corresponds to 1 to 104; that stretch reads MDPIELRSVN…GLSYAMANTG (104 aa). A Phosphoserine modification is found at S49. A helical membrane pass occupies residues 105–125; the sequence is IVLFVIMLLTVAILSLYSVHL. Topologically, residues 126–151 are cytoplasmic; the sequence is LLKTAKEGGSLIYEKLGEKAFGWPGK. A helical membrane pass occupies residues 152–172; it reads IGAFISITMQNIGAMSSYLFI. Topologically, residues 173–195 are extracellular; that stretch reads IKYELPEVIRVFMGLEENTGEWY. A helical transmembrane segment spans residues 196–216; the sequence is LNGNYLVLFVSVGIILPLSLL. At 217–220 the chain is on the cytoplasmic side; the sequence is KNLG. A helical transmembrane segment spans residues 221-241; the sequence is YLGYTSGFSLTCMVFFVSVVI. The Extracellular segment spans residues 242 to 332; the sequence is YKKFQIPCPL…PKYFVFNSRT (91 aa). A disulfide bridge connects residues C249 and C321. N-linked (GlcNAc...) asparagine glycans are attached at residues N260, N264, and N276. The helical transmembrane segment at 333–353 threads the bilayer; the sequence is AYAIPILAFAFVCHPEVLPIY. At 354 to 369 the chain is on the cytoplasmic side; sequence SELKDRSRRKMQTVSN. The chain crosses the membrane as a helical span at residues 370 to 390; it reads ISITGMLVMYLLAALFGYLSF. Topologically, residues 391–411 are extracellular; sequence YGEVEDELLHAYSKVYTFDTA. Residues 412-432 traverse the membrane as a helical segment; sequence LLMVRLAVLVAVTLTVPIVLF. The Cytoplasmic segment spans residues 433–453; that stretch reads PIRTSVITLLFPRRPFSWVKH. The helical transmembrane segment at 454-474 threads the bilayer; that stretch reads FGIAAIIIALNNVLVILVPTI. Over 475-476 the chain is Extracellular; sequence KY. A helical membrane pass occupies residues 477 to 497; it reads IFGFIGASSATMLIFILPAAF. Residues 498 to 514 are Cytoplasmic-facing; that stretch reads YLKLVKKEPLRSPQKIG. The chain crosses the membrane as a helical span at residues 515 to 535; that stretch reads ALVFLVTGIIFMMGSMALIII. Residues 536-547 are Extracellular-facing; sequence DWIYNPPNPDHH.

It belongs to the amino acid/polyamine transporter 2 family. The disulfide bond plays an important role in substrate transport, but has no effect on trafficking to the cell surface. Expressed predominantly in liver, and at lower level in skeletal muscle.

Its subcellular location is the cell membrane. The protein resides in the cell projection. It localises to the microvillus membrane. It carries out the reaction L-alanine(in) + Na(+)(in) = L-alanine(out) + Na(+)(out). The catalysed reaction is L-serine(in) + Na(+)(in) = L-serine(out) + Na(+)(out). It catalyses the reaction glycine(in) + Na(+)(in) = glycine(out) + Na(+)(out). The enzyme catalyses L-cysteine(in) + Na(+)(in) = L-cysteine(out) + Na(+)(out). It carries out the reaction L-asparagine(in) + Na(+)(in) = L-asparagine(out) + Na(+)(out). The catalysed reaction is L-threonine(in) + Na(+)(in) = L-threonine(out) + Na(+)(out). It catalyses the reaction L-proline(in) + Na(+)(in) = L-proline(out) + Na(+)(out). The enzyme catalyses L-methionine(in) + Na(+)(in) = L-methionine(out) + Na(+)(out). It carries out the reaction L-glutamine(in) + Na(+)(in) = L-glutamine(out) + Na(+)(out). The catalysed reaction is L-histidine(in) + Na(+)(in) = L-histidine(out) + Na(+)(out). Its function is as follows. Symporter that cotransports neutral amino acids and sodium ions from the extraccellular to the intracellular side of the cell membrane. The transport is electrogenic, pH dependent and partially tolerates substitution of Na(+) by Li(+). Preferentially transports smaller amino acids, such as glycine, L-alanine, L-serine, L-asparagine and L-threonine, followed by L-cysteine, L-histidine, L-proline and L-glutamine and L-methionine. This chain is Sodium-coupled neutral amino acid transporter 4, found in Rattus norvegicus (Rat).